Reading from the N-terminus, the 262-residue chain is Acyl-[acyl-carrier-protein]--UDP-N-acetylglucosamine O-acyltransferase (262 aa).

It belongs to the transferase hexapeptide repeat family. LpxA subfamily. As to quaternary structure, homotrimer.

It localises to the cytoplasm. It carries out the reaction a (3R)-hydroxyacyl-[ACP] + UDP-N-acetyl-alpha-D-glucosamine = a UDP-3-O-[(3R)-3-hydroxyacyl]-N-acetyl-alpha-D-glucosamine + holo-[ACP]. It functions in the pathway glycolipid biosynthesis; lipid IV(A) biosynthesis; lipid IV(A) from (3R)-3-hydroxytetradecanoyl-[acyl-carrier-protein] and UDP-N-acetyl-alpha-D-glucosamine: step 1/6. In terms of biological role, involved in the biosynthesis of lipid A, a phosphorylated glycolipid that anchors the lipopolysaccharide to the outer membrane of the cell. This is Acyl-[acyl-carrier-protein]--UDP-N-acetylglucosamine O-acyltransferase from Shigella flexneri serotype 5b (strain 8401).